Consider the following 95-residue polypeptide: Small integral membrane protein 18 (95 aa).

A helical transmembrane segment spans residues 35–55; it reads CFVILLLFIFTVVSLVVLAFL.

It localises to the membrane. This Homo sapiens (Human) protein is Small integral membrane protein 18 (SMIM18).